The sequence spans 785 residues: Cadherin-7 (785 aa).

The signal sequence occupies residues M1–A27. Residues E28–R47 constitute a propeptide that is removed on maturation. The Extracellular portion of the chain corresponds to E28–T607. Cadherin domains follow at residues W49 to F153, L154 to F262, P263 to F377, S378 to F482, and F482 to Y599. N-linked (GlcNAc...) asparagine glycans are attached at residues N449 and N530. A helical membrane pass occupies residues G608 to V628. Residues T629–S785 lie on the Cytoplasmic side of the membrane.

The protein resides in the cell membrane. Cadherins are calcium-dependent cell adhesion proteins. They preferentially interact with themselves in a homophilic manner in connecting cells; cadherins may thus contribute to the sorting of heterogeneous cell types. The chain is Cadherin-7 (Cdh7) from Rattus norvegicus (Rat).